A 148-amino-acid chain; its full sequence is Transcription antitermination protein NusB (148 aa).

The protein belongs to the NusB family.

Functionally, involved in transcription antitermination. Required for transcription of ribosomal RNA (rRNA) genes. Binds specifically to the boxA antiterminator sequence of the ribosomal RNA (rrn) operons. The protein is Transcription antitermination protein NusB of Novosphingobium aromaticivorans (strain ATCC 700278 / DSM 12444 / CCUG 56034 / CIP 105152 / NBRC 16084 / F199).